Consider the following 398-residue polypeptide: Acetate kinase 1 (398 aa).

Asparagine 9 serves as a coordination point for Mg(2+). Lysine 16 provides a ligand contact to ATP. Arginine 89 lines the substrate pocket. Aspartate 146 serves as the catalytic Proton donor/acceptor. ATP contacts are provided by residues 206–210 (HLGNG), 281–283 (DCR), and 329–333 (GIGEN). Position 384 (glutamate 384) interacts with Mg(2+).

Belongs to the acetokinase family. As to quaternary structure, homodimer. Mg(2+) serves as cofactor. Mn(2+) is required as a cofactor.

Its subcellular location is the cytoplasm. It carries out the reaction acetate + ATP = acetyl phosphate + ADP. Its pathway is metabolic intermediate biosynthesis; acetyl-CoA biosynthesis; acetyl-CoA from acetate: step 1/2. In terms of biological role, catalyzes the formation of acetyl phosphate from acetate and ATP. Can also catalyze the reverse reaction. The sequence is that of Acetate kinase 1 from Vibrio vulnificus (strain CMCP6).